A 335-amino-acid polypeptide reads, in one-letter code: Tetraacyldisaccharide 4'-kinase (335 aa).

ATP is bound at residue 62 to 69; that stretch reads NVGGTGKT.

Belongs to the LpxK family.

It catalyses the reaction a lipid A disaccharide + ATP = a lipid IVA + ADP + H(+). Its pathway is glycolipid biosynthesis; lipid IV(A) biosynthesis; lipid IV(A) from (3R)-3-hydroxytetradecanoyl-[acyl-carrier-protein] and UDP-N-acetyl-alpha-D-glucosamine: step 6/6. Transfers the gamma-phosphate of ATP to the 4'-position of a tetraacyldisaccharide 1-phosphate intermediate (termed DS-1-P) to form tetraacyldisaccharide 1,4'-bis-phosphate (lipid IVA). The sequence is that of Tetraacyldisaccharide 4'-kinase from Methylobacillus flagellatus (strain ATCC 51484 / DSM 6875 / VKM B-1610 / KT).